Reading from the N-terminus, the 71-residue chain is Large ribosomal subunit protein uL29 (71 aa).

It belongs to the universal ribosomal protein uL29 family.

In Rickettsia akari (strain Hartford), this protein is Large ribosomal subunit protein uL29.